The primary structure comprises 457 residues: D-inositol 3-phosphate glycosyltransferase (457 aa).

Position 34 (His-34) interacts with 1D-myo-inositol 3-phosphate. Residues 40-41 and Gly-48 each bind UDP-N-acetyl-alpha-D-glucosamine; that span reads QP. Residues 45 to 50, Lys-103, Tyr-136, Thr-160, and Arg-180 contribute to the 1D-myo-inositol 3-phosphate site; that span reads DAGGMN. 3 residues coordinate UDP-N-acetyl-alpha-D-glucosamine: Arg-267, Lys-272, and Val-333. Mg(2+) contacts are provided by Phe-342, Arg-343, and Ala-345. UDP-N-acetyl-alpha-D-glucosamine is bound by residues Glu-355 and Glu-363. Thr-369 is a binding site for Mg(2+).

The protein belongs to the glycosyltransferase group 1 family. MshA subfamily. In terms of assembly, homodimer.

It catalyses the reaction 1D-myo-inositol 3-phosphate + UDP-N-acetyl-alpha-D-glucosamine = 1D-myo-inositol 2-acetamido-2-deoxy-alpha-D-glucopyranoside 3-phosphate + UDP + H(+). Its function is as follows. Catalyzes the transfer of a N-acetyl-glucosamine moiety to 1D-myo-inositol 3-phosphate to produce 1D-myo-inositol 2-acetamido-2-deoxy-glucopyranoside 3-phosphate in the mycothiol biosynthesis pathway. The chain is D-inositol 3-phosphate glycosyltransferase from Streptomyces coelicolor (strain ATCC BAA-471 / A3(2) / M145).